We begin with the raw amino-acid sequence, 405 residues long: Potassium channel subfamily K member 13 (405 aa).

Topologically, residues 1–19 (MAGRGCSCSPGHLNEDNAR) are cytoplasmic. Residues 20–40 (FLLLAGLILLYLLGGAAVFSA) traverse the membrane as a helical segment. 2 N-linked (GlcNAc...) asparagine glycosylation sites follow: asparagine 59 and asparagine 65. Positions 95–115 (WDFTGAFYFVGTVVTTIGFGM) form an intramembrane region, pore-forming. Residues threonine 110, isoleucine 111, and glycine 112 each coordinate K(+). The interval 110-115 (TIGFGM) is selectivity filter 1. The chain crosses the membrane as a helical span at residues 125–145 (VFLIFYGLIGCASTILFFNLF). Residues 146–193 (LERLITVIAYVMRTCHHQQLRRRGTVARDNRKAPRKGEADSLAGWKPS) are Cytoplasmic-facing. A helical transmembrane segment spans residues 194–214 (VYYVMLILCLASVAISCGASA). An intramembrane region (pore-forming) is located at residues 224 to 244 (YFDSVYFCFVASSTIGFGDLV). Residues threonine 237, isoleucine 238, glycine 239, and phenylalanine 240 each contribute to the K(+) site. Residues 237 to 242 (TIGFGD) form a selectivity filter 2 region. The chain crosses the membrane as a helical span at residues 263-283 (FFILMGVCCIYSMFNVISILI). Residues 284–405 (KQTVNWILRK…NRLAETSGDR (122 aa)) lie on the Cytoplasmic side of the membrane.

It belongs to the two pore domain potassium channel (TC 1.A.1.8) family. As to quaternary structure, homodimer. Heterodimer with KCNK12. As to expression, ubiquitous. In brain expression is rather low and restricted to the olfactory bulb and tubercle, to the ventromedial hypothalamic nucleus, lateral septal nucleus dorsal, lateral mammillary nucleus, lateral parabrachial nuclei, reticular nucleus and reunions nuclei.

It localises to the cell membrane. The catalysed reaction is K(+)(in) = K(+)(out). The channel currents are activated by arachidonic acid, inhibited by volatile anesthetic halothane, partially inhibited by Ba(2+) ions and only weakly inhibited by extracellular acidification to pH 6. In terms of biological role, k(+) channel that conducts outward rectifying tonic currents potentiated by purinergic signals. Homo- and heterodimerizes to form functional channels with distinct regulatory and gating properties. Contributes most of K(+) currents at the plasma membrane of resting microglia. Maintains a depolarized membrane potential required for proper ramified microglia morphology and phagocytosis, selectively mediating microglial pruning of presynaptic compartments at hippocampal excitatory synapses. Upon local release of ATP caused by neuronal injury or infection, it is potentiated by P2RY12 and P2RX7 receptor signaling and contributes to ATP-triggered K(+) efflux underlying microglial NLRP3 inflammasome assembly and IL1B release. The sequence is that of Potassium channel subfamily K member 13 from Rattus norvegicus (Rat).